Here is a 178-residue protein sequence, read N- to C-terminus: ATP-dependent protease subunit HslV (178 aa).

Threonine 7 is an active-site residue. Glycine 162, cysteine 165, and threonine 168 together coordinate Na(+).

The protein belongs to the peptidase T1B family. HslV subfamily. As to quaternary structure, a double ring-shaped homohexamer of HslV is capped on each side by a ring-shaped HslU homohexamer. The assembly of the HslU/HslV complex is dependent on binding of ATP.

Its subcellular location is the cytoplasm. The catalysed reaction is ATP-dependent cleavage of peptide bonds with broad specificity.. Allosterically activated by HslU binding. Protease subunit of a proteasome-like degradation complex believed to be a general protein degrading machinery. The chain is ATP-dependent protease subunit HslV from Herminiimonas arsenicoxydans.